A 1374-amino-acid chain; its full sequence is MKVSDRRKFEKANFDEFESALNNKNDLVHCPSITLFESIPTEVRSFYEDEKSGLIKVVKFRTGAMDRKRSFEKIVVSVMVGKNVQKFLTFVEDEPDFQGGPIPSKYLIPKKINLMVYTLFQVHTLKFNRKDYDTLSLFYLNRGYYNELSFRVLERCHEIASARPNDSSTMRTFTDFVSGAPIVRSLQKSTIRRYGYNLAPHMFLLLHVDELSIFSAYQASLPGEKKVDTERLKRDLCPRKPIEIKYFSQICNDMMNKKDRLGDVLATAQRIRRRYNKNGSSEPRLKTLDGLTSERWIQWLGLESDYHCSFSSTRNAEDVVAGEAASSDHDQKISRVTRKRPREPKSTNDILVAGQKLFGSSFEFRDLHQLRLCHEIYMADTPSVAVQAPPGYGKTELFHLPLIALASKGDVKYVSFLFVPYTVLLANCMIRLGRCGCLNVAPVRNFIEEGCDGVTDLYVGIYDDLASTNFTDRIAAWENIVECTFRTNNVKLGYLIVDEFHNFETEVYRQSQFGGITNLDFDAFEKAIFLSGTAPEAVADAALQRIGLTGLAKKSMDINELKRSEDLSRGLSSYPTRMFNLIKEKSEVPLGHVHKIWKKVESQPEEALKLLLALFEIEPESKAIVVASTTNEVEELACSWRKYFRVVWIHGKLGAAEKVSRTKEFVTDGSMRVLIGTKLVTEGIDIKQLMMVIMLDNRLNIIELIQGVGRLRDGGLCYLLSRKNSWAARNRKGELPPIKEGCITEQVREFYGLESKKGKKGQHVGCCGSRTDLSADTVELIERMDRLAEKQATASMSIVALPSSFQESNSSDRCRKYCSSDEDSNTCIHGSANASTNATTNSSTNATTTASTNVRTSATTTASINVRTSATTTESTNSSTNATTTASTNVRTSATTTASINVRTSATTTESTNSNTSATTTESTDSNTSATTTESTDSSTNATTTASINVRTSATTTESTNSNTNATTTESTNSSTNATTTEGTNSNTSATTTASTNSSTNATTTESTNASAKEDANKDGNAEDNRFHPVTDINKESYKRKGSQMVLLERKKLKAQFPNTSENMNVLQFLGFRSDEIKHLFLYGIDVYFCPEGVFTQYGLCKGCQKMFELCVCWAGQKVSYRRMAWEALAVERMLRNDEEYKEYLEDIEPYHGDPVGYLKFFSVKRGEIYSQIQRNYAWYLAITRRRETISVLDSTRGKQGSQVFRMSGRQIKELYYKVWSNLRESKTEVLQYFLNWDEKKCREEWEAKDDTVFVEALEKVGVFQRLRSMTSAGLQGPQYVKLQFSRHHRQLRSRYELSLGMHLRDQLALGVTPSKVPHWTAFLSMLIGLFYNKTFRQKLEYLLEQISEVWLLPHWVDLANVEVLAADNTRVPC.

The interval 321 to 345 (AGEAASSDHDQKISRVTRKRPREPK) is disordered. The Helicase ATP-binding domain maps to 375-552 (EIYMADTPSV…LQRIGLTGLA (178 aa)). Residue 388–395 (APPGYGKT) coordinates ATP. Residues 498–501 (DEFH) carry the DEAH box motif. The Helicase C-terminal domain occupies 609-758 (KLLLALFEIE…EFYGLESKKG (150 aa)). A compositionally biased stretch (low complexity) spans 832–1011 (ANASTNATTN…ATTTESTNAS (180 aa)). Positions 832–1035 (ANASTNATTN…RFHPVTDINK (204 aa)) are disordered. Residues 1012-1035 (AKEDANKDGNAEDNRFHPVTDINK) show a composition bias toward basic and acidic residues.

This sequence belongs to the helicase family. Yeast subtelomeric Y' repeat subfamily.

Its function is as follows. Catalyzes DNA unwinding and is involved in telomerase-independent telomere maintenance. In Saccharomyces cerevisiae (strain ATCC 204508 / S288c) (Baker's yeast), this protein is Y' element ATP-dependent helicase YLL067C.